The sequence spans 313 residues: Porphobilinogen deaminase (313 aa).

Cys249 carries the post-translational modification S-(dipyrrolylmethanemethyl)cysteine.

Belongs to the HMBS family. Monomer. Dipyrromethane is required as a cofactor.

It carries out the reaction 4 porphobilinogen + H2O = hydroxymethylbilane + 4 NH4(+). Its pathway is porphyrin-containing compound metabolism; protoporphyrin-IX biosynthesis; coproporphyrinogen-III from 5-aminolevulinate: step 2/4. In terms of biological role, tetrapolymerization of the monopyrrole PBG into the hydroxymethylbilane pre-uroporphyrinogen in several discrete steps. The polypeptide is Porphobilinogen deaminase (Paracoccus denitrificans (strain Pd 1222)).